The chain runs to 452 residues: Pup--protein ligase (452 aa).

Glu9 contacts Mg(2+). Arg53 provides a ligand contact to ATP. Tyr55 is a Mg(2+) binding site. The active-site Proton acceptor is Asp57. Glu63 contacts Mg(2+). The ATP site is built by Thr66 and Trp419.

The protein belongs to the Pup ligase/Pup deamidase family. Pup-conjugating enzyme subfamily.

It catalyses the reaction ATP + [prokaryotic ubiquitin-like protein]-L-glutamate + [protein]-L-lysine = ADP + phosphate + N(6)-([prokaryotic ubiquitin-like protein]-gamma-L-glutamyl)-[protein]-L-lysine.. The protein operates within protein degradation; proteasomal Pup-dependent pathway. It functions in the pathway protein modification; protein pupylation. Catalyzes the covalent attachment of the prokaryotic ubiquitin-like protein modifier Pup to the proteasomal substrate proteins, thereby targeting them for proteasomal degradation. This tagging system is termed pupylation. The ligation reaction involves the side-chain carboxylate of the C-terminal glutamate of Pup and the side-chain amino group of a substrate lysine. This is Pup--protein ligase from Nakamurella multipartita (strain ATCC 700099 / DSM 44233 / CIP 104796 / JCM 9543 / NBRC 105858 / Y-104) (Microsphaera multipartita).